Reading from the N-terminus, the 136-residue chain is Nucleoside diphosphate kinase (136 aa).

K10, F58, R86, T92, R104, and N114 together coordinate ATP. H117 functions as the Pros-phosphohistidine intermediate in the catalytic mechanism.

It belongs to the NDK family. As to quaternary structure, homotetramer. The cofactor is Mg(2+).

The protein resides in the cytoplasm. It catalyses the reaction a 2'-deoxyribonucleoside 5'-diphosphate + ATP = a 2'-deoxyribonucleoside 5'-triphosphate + ADP. The catalysed reaction is a ribonucleoside 5'-diphosphate + ATP = a ribonucleoside 5'-triphosphate + ADP. Its function is as follows. Major role in the synthesis of nucleoside triphosphates other than ATP. The ATP gamma phosphate is transferred to the NDP beta phosphate via a ping-pong mechanism, using a phosphorylated active-site intermediate. The polypeptide is Nucleoside diphosphate kinase (Mycobacterium ulcerans (strain Agy99)).